Here is a 522-residue protein sequence, read N- to C-terminus: Target of rapamycin complex 2 subunit MAPKAP1 (522 aa).

At Ala2 the chain carries N-acetylalanine. The tract at residues 2–184 (AFLDNPTIIL…KKIDVYLPLH (183 aa)) is interaction with MAP3K2. Residues 2-267 (AFLDNPTIIL…GFSTLALVEK (266 aa)) form an interaction with NBN region. Thr86 carries the post-translational modification Phosphothreonine. Phosphoserine occurs at positions 128, 186, 315, and 356. A CRIM domain is found at 139-267 (QSILSVRLEQ…GFSTLALVEK (129 aa)). An SIN1-type RBD region spans residues 279-353 (LFVRINAAHG…QSAWEFCLVR (75 aa)). The SIN1-type PH domain maps to 382-487 (HYKSFKVSMI…IVLKVNYILE (106 aa)). Arg393 is an a 1,2-diacyl-sn-glycero-3-phospho-(1D-myo-inositol-3,4,5-trisphosphate) binding site. Thr398 bears the Phosphothreonine mark. 2 residues coordinate a 1,2-diacyl-sn-glycero-3-phospho-(1D-myo-inositol-3,4,5-trisphosphate): Lys428 and Lys464. An interaction with ATF2 region spans residues 468–522 (FESDAATVNEIVLKVNYILESRASTARADYFAQKQRKLNRRTSFSFQKEKKSGQQ). Ser510 carries the phosphoserine modification.

The protein belongs to the SIN1 family. In terms of assembly, component of the mechanistic target of rapamycin complex 2 (mTORC2), consisting in two heterotretramers composed of MTOR, MLST8, RICTOR and MAPKAP1/SIN1. The mTORC2 core complex associates with PRR5/PROTOR1 and/or PRR5L/PROTOR2. Contrary to mTORC1, mTORC2 does not bind to and is not sensitive to FKBP12-rapamycin. Interacts with MAP3K2. Interacts with ATF2. Interacts with MAPK8. Interacts with GTP-bound HRAS and KRAS; inhibiting their activity. Interacts with IFNAR2. Interacts with CCDC28B. As to quaternary structure, interacts with NBN. Phosphorylation at Ser-128 by PKC promotes relocalization to the perinuclear region, where the mTORC2 complex specifically mediates phosphorylation of SGK1. Phosphorylated at Thr-86 by AKT1 or RPS6KB1 in the presence of growth factors; the effect of this phosphorylation is however unclear. According to two studies, phosphorylation at Thr-86 by AKT1 is part of a positive feedback loop that increases mTORC2 activation. According to another study, phosphorylation at Thr-86 and Thr-398 by RPS6KB1 promotes dissociation from the mTORC2 complex, leading to inhibit mTORC2 signaling. Ubiquitously expressed, with highest levels in heart and skeletal muscle.

The protein resides in the cell membrane. The protein localises to the endoplasmic reticulum membrane. It is found in the early endosome membrane. It localises to the late endosome membrane. Its subcellular location is the lysosome membrane. The protein resides in the golgi apparatus membrane. The protein localises to the mitochondrion outer membrane. It is found in the cytoplasm. It localises to the perinuclear region. Its subcellular location is the nucleus. The protein resides in the cytosol. Its activity is regulated as follows. Phosphatidylinositol 3,4,5-trisphosphate (PI(3,4,5)P3) promotes MTOR activation by relieving MAPKAP1/SIN1-mediated inhibition of MTOR that takes place in absence of PI(3,4,5)P3. Its function is as follows. Component of the mechanistic target of rapamycin complex 2 (mTORC2), which transduces signals from growth factors to pathways involved in proliferation, cytoskeletal organization, lipogenesis and anabolic output. In response to growth factors, mTORC2 phosphorylates and activates AGC protein kinase family members, including AKT (AKT1, AKT2 and AKT3), PKC (PRKCA, PRKCB and PRKCE) and SGK1. In contrast to mTORC1, mTORC2 is nutrient-insensitive. Within the mTORC2 complex, MAPKAP1/SIN1 acts as a substrate adapter which recognizes and binds AGC protein kinase family members for phosphorylation by MTOR. mTORC2 plays a critical role in AKT1 activation by mediating phosphorylation of different sites depending on the context, such as 'Thr-450', 'Ser-473', 'Ser-477' or 'Thr-479', facilitating the phosphorylation of the activation loop of AKT1 on 'Thr-308' by PDPK1/PDK1 which is a prerequisite for full activation. mTORC2 catalyzes the phosphorylation of SGK1 at 'Ser-422' and of PRKCA on 'Ser-657'. The mTORC2 complex also phosphorylates various proteins involved in insulin signaling, such as FBXW8 and IGF2BP1. mTORC2 acts upstream of Rho GTPases to regulate the actin cytoskeleton, probably by activating one or more Rho-type guanine nucleotide exchange factors. mTORC2 promotes the serum-induced formation of stress-fibers or F-actin. MAPKAP1 inhibits MAP3K2 by preventing its dimerization and autophosphorylation. Inhibits HRAS and KRAS independently of mTORC2 complex. Enhances osmotic stress-induced phosphorylation of ATF2 and ATF2-mediated transcription. Involved in ciliogenesis, regulates cilia length through its interaction with CCDC28B independently of mTORC2 complex. Functionally, in contrast to isoform 1, isoform 2 and isoform 6, isoform 4 is not a component of the a mTORC2 complex. This chain is Target of rapamycin complex 2 subunit MAPKAP1, found in Homo sapiens (Human).